We begin with the raw amino-acid sequence, 949 residues long: MERSTVLIQPGLWTRDTSWTLLYFLCYILPQTSPQVLRIGGIFETVENEPVNVEELAFKFAVTSINRNRTLMPNTTLTYDIQRINLFDSFEASRRACDQLALGVAALFGPSHSSSVSAVQSICNALEVPHIQTRWKHPSVDSRDLFYINLYPDYAAISRAVLDLVLYYNWKTVTVVYEDSTGLIRLQELIKAPSRYNIKIKIRQLPPANKDAKPLLKEMKKSKEFYVIFDCSHETAAEILKQILFMGMMTEYYHYFFTTLDLFALDLELYRYSGVNMTGFRKLNIDNPHVSSIIEKWSMERLQAPPRPETGLLDGMMTTEAALMYDAVYMVAIASHRASQLTVSSLQCHRHKPCALGPRFMNLIKEARWDGLTGRITFNKTDGLRKDFDLDIISLKEEGTEKASGEVSKHLYKVWKKIGIWNSNSGLNMTDGNRDRSNNITDSLANRTLIVTTILEEPYVMYRKSDKPLYGNDRFEAYCLDLLKELSNILGFLYDVKLVPDGKYGAQNDKGEWNGMVKELIDHRADLAVAPLTITYVREKVIDFSKPFMTLGISILYRKPNGTNPGVFSFLNPLSPDIWMYVLLACLGVSCVLFVIARFTPYEWYNPHPCNPDSDVVENNFTLLNSFWFGVGALMQQGSELMPKALSTRIVGGIWWFFTLIIISSYTANLAAFLTVERMESPIDSADDLAKQTKIEYGAVRDGSTMTFFKKSKISTYEKMWAFMSSRQQSALVKNSDEGIQRVLTTDYALLMESTSIEYVTQRNCNLTQIGGLIDSKGYGVGTPIGSPYRDKITIAILQLQEEGKLHMMKEKWWRGNGCPEEDSKEASALGVENIGGIFIVLAAGLVLSVFVAIGEFLYKSRKNNDVEQKGKSSRLRFYFRNKVRFHGSKKESLGVEKCLSFNAIMEELGISLKNQKKLKKKSRTKGKSSFTSILTCHQRRTQRKETVA.

An N-terminal signal peptide occupies residues 1–30; that stretch reads MERSTVLIQPGLWTRDTSWTLLYFLCYILP. Over 31 to 576 the chain is Extracellular; that stretch reads QTSPQVLRIG…VFSFLNPLSP (546 aa). N-linked (GlcNAc...) asparagine glycosylation is found at Asn-68, Asn-74, Asn-276, Asn-379, Asn-428, Asn-439, and Asn-446. Residues Pro-531, Thr-533, and Arg-538 each contribute to the L-glutamate site. N-linked (GlcNAc...) asparagine glycosylation is present at Asn-561. A helical membrane pass occupies residues 577 to 597; that stretch reads DIWMYVLLACLGVSCVLFVIA. At 598–653 the chain is on the cytoplasmic side; that stretch reads RFTPYEWYNPHPCNPDSDVVENNFTLLNSFWFGVGALMQQGSELMPKALSTRIVGG. The helical transmembrane segment at 654–674 threads the bilayer; it reads IWWFFTLIIISSYTANLAAFL. The Extracellular segment spans residues 675 to 834; the sequence is TVERMESPID…KEASALGVEN (160 aa). L-glutamate contacts are provided by Ser-704 and Thr-705. Phosphoserine; by PKC is present on Ser-725. An L-glutamate-binding site is contributed by Glu-753. Thr-761 is subject to Phosphothreonine; by PKC. Cys-765 and Cys-819 are oxidised to a cystine. The N-linked (GlcNAc...) asparagine glycan is linked to Asn-766. Residues 835 to 855 form a helical membrane-spanning segment; the sequence is IGGIFIVLAAGLVLSVFVAIG. The Cytoplasmic portion of the chain corresponds to 856–949; the sequence is EFLYKSRKNN…RRTQRKETVA (94 aa).

It belongs to the glutamate-gated ion channel (TC 1.A.10.1) family. GRIK1 subfamily. Homotetramer or heterotetramer of pore-forming glutamate receptor subunits. Tetramers may be formed by the dimerization of dimers. Can form functional heteromeric receptors with GRIK4 and GRIK5. Interacts with KLHL17. In terms of tissue distribution, expressed in the olfactory bulb (at protein level). Expressed in subsets of neurons throughout the developing and adult central and peripheral nervous systems. In the CNS principally in the medial amygdaloid nuclei, medial habenulae, pyriform and cingulate cortices, and Purkinje cell layer. Also highly expressed in embryonic and adult dorsal root ganglia. Expressed at high levels in the trigeminal ganglion neurons.

The protein localises to the cell membrane. It localises to the postsynaptic cell membrane. It carries out the reaction Ca(2+)(in) = Ca(2+)(out). In terms of biological role, ionotropic glutamate receptor that functions as a cation-permeable ligand-gated ion channel, gated by L-glutamate and the glutamatergic agonist kainic acid. L-glutamate acts as an excitatory neurotransmitter at many synapses in the central nervous system. Binding of the excitatory neurotransmitter L-glutamate induces a conformation change, leading to the opening of the cation channel, and thereby converts the chemical signal to an electrical impulse. The receptor then desensitizes rapidly and enters a transient inactive state, characterized by the presence of bound agonist. The sequence is that of Glutamate receptor ionotropic, kainate 1 (Grik1) from Rattus norvegicus (Rat).